Reading from the N-terminus, the 391-residue chain is Inner membrane protein YdcO (391 aa).

Over 1-9 (MRLFSIPPP) the chain is Cytoplasmic. The chain crosses the membrane as a helical span at residues 10-30 (TLLAGFLAVLIGYASSAAIIW). Topologically, residues 31 to 42 (QAAIVAGATTAQ) are periplasmic. The chain crosses the membrane as a helical span at residues 43–63 (ISGWMTALGLAMGVSTLTLTL). Over 64 to 93 (WYRVPVLTAWSTPGAALLVTGLQGLTLNEA) the chain is Cytoplasmic. A helical membrane pass occupies residues 94-114 (IGVFIVTNALIVLCGITGLFA). The Periplasmic segment spans residues 115–123 (RLMRIIPHS). A helical transmembrane segment spans residues 124–144 (LAAAMLAGILLRFGLQAFASL). At 145–167 (DGQFTLCGSMLLVWLATKAVAPR) the chain is on the cytoplasmic side. Residues 168–188 (YAVIAAMIIGIVIVIAQGDVV) form a helical membrane-spanning segment. Residues 189-200 (TTDVVFKPVLPT) lie on the Periplasmic side of the membrane. Residues 201–221 (YITPDFSFAHSLSVALPLFLV) form a helical membrane-spanning segment. Topologically, residues 222–246 (TMASQNAPGIAAMKAAGYSAPVSPL) are cytoplasmic. A helical transmembrane segment spans residues 247–267 (IVFTGLLALVFSPFGVYSVGI). Over 268 to 287 (AAITAAICQSPEAHPDKDQR) the chain is Periplasmic. The helical transmembrane segment at 288 to 308 (WLAAAVAGIFYLLAGLFGSAI) threads the bilayer. Residues 309-311 (TGM) lie on the Cytoplasmic side of the membrane. The chain crosses the membrane as a helical span at residues 312–332 (MAALPVSWIQMLAGLALLSTI). Over 333–361 (GGSLYQALHNERERDAAVVAFLVTASGLT) the chain is Periplasmic. The chain crosses the membrane as a helical span at residues 362 to 382 (LVGIGSAFWGLIAGGVCYVVL). The Cytoplasmic portion of the chain corresponds to 383–391 (NLIADRNRY).

It localises to the cell inner membrane. The polypeptide is Inner membrane protein YdcO (ydcO) (Escherichia coli (strain K12)).